Consider the following 508-residue polypeptide: ATP synthase subunit alpha (508 aa).

171 to 178 (GDRQTGKT) serves as a coordination point for ATP.

It belongs to the ATPase alpha/beta chains family. F-type ATPases have 2 components, CF(1) - the catalytic core - and CF(0) - the membrane proton channel. CF(1) has five subunits: alpha(3), beta(3), gamma(1), delta(1), epsilon(1). CF(0) has three main subunits: a(1), b(2) and c(9-12). The alpha and beta chains form an alternating ring which encloses part of the gamma chain. CF(1) is attached to CF(0) by a central stalk formed by the gamma and epsilon chains, while a peripheral stalk is formed by the delta and b chains.

Its subcellular location is the cell membrane. It catalyses the reaction ATP + H2O + 4 H(+)(in) = ADP + phosphate + 5 H(+)(out). Its function is as follows. Produces ATP from ADP in the presence of a proton gradient across the membrane. The alpha chain is a regulatory subunit. The protein is ATP synthase subunit alpha of Protochlamydia amoebophila (strain UWE25).